Here is a 684-residue protein sequence, read N- to C-terminus: Hydroxyproline O-galactosyltransferase GALT2 (684 aa).

The Cytoplasmic portion of the chain corresponds to 1 to 22 (MKRVKSESFRGVYSSRRFKLSH). The chain crosses the membrane as a helical; Signal-anchor for type II membrane protein span at residues 23-43 (FLLAIAGFYLVFLAFKFPHFI). At 44–684 (EMVAMLSGDT…KGRPQCCNFR (641 aa)) the chain is on the lumenal side. The disordered stretch occupies residues 80–102 (KLEDEDHQSGPSTTQKVSPEEKI). N-linked (GlcNAc...) asparagine glycans are attached at residues N103, N127, and N162. Positions 191-405 (RIMLLPCGLA…DVDIHSIHAT (215 aa)) constitute a Galectin domain. N-linked (GlcNAc...) asparagine glycans are attached at residues N524 and N632.

It belongs to the glycosyltransferase 31 family. The cofactor is Mn(2+). Expressed in stems and at lower levels in cauline leaves and siliques.

Its subcellular location is the golgi apparatus membrane. It participates in protein modification; protein glycosylation. Functionally, possesses hydroxyproline O-galactosyltransferase activity. Transfers galactose from UDP-galactose to hydroxyproline residues in the arabinogalactan proteins (AGPs). Is specific for AGPs containing non-contiguous peptidyl hydroxyproline residues. Utilizes UDP-galactose solely as sugar donor. The addition of galactose onto the peptidyl hydroxyproline residues in AGP core proteins represents the first committed step in arabinogalactan polysaccharide addition. AGP glycans play essential roles in both vegetative and reproductive plant growth. The chain is Hydroxyproline O-galactosyltransferase GALT2 from Arabidopsis thaliana (Mouse-ear cress).